A 215-amino-acid chain; its full sequence is LysM and putative peptidoglycan-binding domain-containing protein 2 (215 aa).

Positions 1–40 are disordered; sequence MADLSPAPALREGGPRAHRPSAPSPPPRSRSTSEPEEAEL. Alanine 2 is modified (N-acetylalanine). Phosphoserine occurs at positions 5, 24, 33, and 57. The region spanning 71–115 is the LysM domain; that stretch reads VEHRVRAGDTLQGIALKYGVTMEQIKRANKLFTNDCIFLKKTLSI. Disordered regions lie at residues 135 to 176 and 195 to 215; these read ESET…EVSA and RKLK…LYHS. A compositionally biased stretch (acidic residues) spans 145–156; it reads QEEEPVVSEEEL. Positions 157-169 are enriched in pro residues; it reads PPPSPQDPDPKPA. The segment covering 196–205 has biased composition (basic and acidic residues); that stretch reads KLKEESRDEE.

This is LysM and putative peptidoglycan-binding domain-containing protein 2 (Lysmd2) from Mus musculus (Mouse).